A 260-amino-acid chain; its full sequence is Pro-thyrotropin-releasing hormone (260 aa).

An N-terminal signal peptide occupies residues 1-24; the sequence is MPSIQLPVLLLCLTLSGVCLNGRQ. The disordered stretch occupies residues 72-112; that stretch reads PQWLSKRQHPGKRYISDPEKRQHPGKRDVEEKASFGDIQKR. A Pyrrolidone carboxylic acid modification is found at Gln-79. Pro-81 bears the Proline amide mark. Residues 85 to 112 show a composition bias toward basic and acidic residues; that stretch reads YISDPEKRQHPGKRDVEEKASFGDIQKR. Position 93 is a pyrrolidone carboxylic acid (Gln-93). Position 95 is a proline amide (Pro-95). Pyrrolidone carboxylic acid is present on Gln-113. Leucine amide is present on Leu-115. The residue at position 134 (Gln-134) is a Pyrrolidone carboxylic acid. Position 136 is a proline amide (Pro-136). The residue at position 163 (Gln-163) is a Pyrrolidone carboxylic acid. Pro-165 bears the Proline amide mark. The segment covering 195–207 has biased composition (basic and acidic residues); it reads KHQQFGNRDRDSD. Disordered regions lie at residues 195–217 and 238–260; these read KHQQ…PCDL and KEGV…ETEE. At Gln-246 the chain carries Pyrrolidone carboxylic acid. At Pro-248 the chain carries Proline amide.

Belongs to the TRH family.

Its subcellular location is the secreted. Functionally, functions as a regulator of the biosynthesis of TSH in the anterior pituitary gland and as a neurotransmitter/ neuromodulator in the central and peripheral nervous systems. The protein is Pro-thyrotropin-releasing hormone (TRH) of Gallus gallus (Chicken).